Here is a 780-residue protein sequence, read N- to C-terminus: Phosphoenolpyruvate synthase (780 aa).

His-409 acts as the Tele-phosphohistidine intermediate in catalysis. Substrate-binding residues include Arg-499, Arg-566, Glu-668, Gly-689, Ser-690, Asn-691, and Asp-692. Glu-668 lines the Mg(2+) pocket. Asp-692 provides a ligand contact to Mg(2+).

This sequence belongs to the PEP-utilizing enzyme family. Requires Mg(2+) as cofactor.

The catalysed reaction is pyruvate + ATP + H2O = phosphoenolpyruvate + AMP + phosphate + 2 H(+). The protein operates within carbohydrate biosynthesis; gluconeogenesis. Functionally, catalyzes the phosphorylation of pyruvate to phosphoenolpyruvate. The sequence is that of Phosphoenolpyruvate synthase (ppsA) from Deinococcus radiodurans (strain ATCC 13939 / DSM 20539 / JCM 16871 / CCUG 27074 / LMG 4051 / NBRC 15346 / NCIMB 9279 / VKM B-1422 / R1).